The sequence spans 128 residues: L-ectoine synthase (128 aa).

Belongs to the ectoine synthase family.

The enzyme catalyses (2S)-4-acetamido-2-aminobutanoate = L-ectoine + H2O. Its pathway is amine and polyamine biosynthesis; ectoine biosynthesis; L-ectoine from L-aspartate 4-semialdehyde: step 3/3. Functionally, catalyzes the circularization of gamma-N-acetyl-alpha,gamma-diaminobutyric acid (ADABA) to ectoine (1,4,5,6-tetrahydro-2-methyl-4-pyrimidine carboxylic acid), which is an excellent osmoprotectant. This is L-ectoine synthase from Oceanobacillus iheyensis (strain DSM 14371 / CIP 107618 / JCM 11309 / KCTC 3954 / HTE831).